Consider the following 599-residue polypeptide: Sulfite reductase [NADPH] flavoprotein alpha-component (599 aa).

The region spanning 64 to 202 (ITIISASQTG…AASEWRARVV (139 aa)) is the Flavodoxin-like domain. FMN-binding positions include 70–75 (SQTGNA), 117–120 (STQG), and 153–162 (LGDSSYEFFC). An FAD-binding FR-type domain is found at 234 to 448 (DSPLVASLSV…IEHNDNFRLP (215 aa)). FAD contacts are provided by residues threonine 322, alanine 356, 386-389 (RLYS), 404-406 (TVG), tyrosine 410, and 419-422 (GGAS). NADP(+) is bound by residues 519-520 (SR), 525-529 (KVYVQ), and aspartate 561. An FAD-binding site is contributed by tyrosine 599.

This sequence belongs to the NADPH-dependent sulphite reductase flavoprotein subunit CysJ family. It in the N-terminal section; belongs to the flavodoxin family. The protein in the C-terminal section; belongs to the flavoprotein pyridine nucleotide cytochrome reductase family. As to quaternary structure, alpha(8)-beta(8). The alpha component is a flavoprotein, the beta component is a hemoprotein. The cofactor is FAD. FMN serves as cofactor.

The catalysed reaction is hydrogen sulfide + 3 NADP(+) + 3 H2O = sulfite + 3 NADPH + 4 H(+). It functions in the pathway sulfur metabolism; hydrogen sulfide biosynthesis; hydrogen sulfide from sulfite (NADPH route): step 1/1. Component of the sulfite reductase complex that catalyzes the 6-electron reduction of sulfite to sulfide. This is one of several activities required for the biosynthesis of L-cysteine from sulfate. The flavoprotein component catalyzes the electron flow from NADPH -&gt; FAD -&gt; FMN to the hemoprotein component. In Escherichia coli O9:H4 (strain HS), this protein is Sulfite reductase [NADPH] flavoprotein alpha-component.